A 96-amino-acid polypeptide reads, in one-letter code: Acetolactate synthase isozyme 1 small subunit (96 aa).

The ACT domain occupies 10–83; it reads ILELTVRNHP…DVVKVQRNQS (74 aa).

Belongs to the acetolactate synthase small subunit family. In terms of assembly, dimer of large and small chains.

The catalysed reaction is 2 pyruvate + H(+) = (2S)-2-acetolactate + CO2. It participates in amino-acid biosynthesis; L-isoleucine biosynthesis; L-isoleucine from 2-oxobutanoate: step 1/4. The protein operates within amino-acid biosynthesis; L-valine biosynthesis; L-valine from pyruvate: step 1/4. The sequence is that of Acetolactate synthase isozyme 1 small subunit (ilvN) from Escherichia coli O157:H7.